We begin with the raw amino-acid sequence, 552 residues long: C-type lectin receptor-like tyrosine-protein kinase At1g52310 (552 aa).

The first 27 residues, 1-27, serve as a signal peptide directing secretion; sequence MELKWVSCRKQSLFLISCLALLCLASL. Over 28–201 the chain is Extracellular; that stretch reads DTISCESTQN…DIKCRNCHKY (174 aa). N-linked (GlcNAc...) asparagine glycosylation is found at Asn-37, Asn-59, Asn-69, Asn-106, Asn-118, Asn-137, Asn-154, Asn-169, and Asn-180. The 130-residue stretch at 59 to 188 folds into the C-type lectin domain; the sequence is NQTKCYAYFK…CNASHAFVCA (130 aa). Intrachain disulfides connect Cys-80–Cys-187 and Cys-164–Cys-179. A helical membrane pass occupies residues 202–222; sequence LVILAVVSGLILFTTFAIILW. The Cytoplasmic segment spans residues 223-552; the sequence is LLVYKRSKKR…QQLVQPLEVK (330 aa). The region spanning 268 to 546 is the Protein kinase domain; it reads SEANRLAGDA…HVVHQLQQLV (279 aa). ATP-binding positions include 274–282 and Lys-296; that span reads AGDAKTGGT. Asp-394 serves as the catalytic Proton acceptor.

This sequence belongs to the protein kinase superfamily. Tyr protein kinase family.

It localises to the cell membrane. The catalysed reaction is L-tyrosyl-[protein] + ATP = O-phospho-L-tyrosyl-[protein] + ADP + H(+). This Arabidopsis thaliana (Mouse-ear cress) protein is C-type lectin receptor-like tyrosine-protein kinase At1g52310.